The following is a 208-amino-acid chain: FMN-dependent NADH:quinone oxidoreductase 1 (208 aa).

17–19 contacts FMN; that stretch reads SVS.

The protein belongs to the azoreductase type 1 family. Homodimer. FMN is required as a cofactor.

The enzyme catalyses 2 a quinone + NADH + H(+) = 2 a 1,4-benzosemiquinone + NAD(+). It carries out the reaction N,N-dimethyl-1,4-phenylenediamine + anthranilate + 2 NAD(+) = 2-(4-dimethylaminophenyl)diazenylbenzoate + 2 NADH + 2 H(+). Its function is as follows. Quinone reductase that provides resistance to thiol-specific stress caused by electrophilic quinones. Also exhibits azoreductase activity. Catalyzes the reductive cleavage of the azo bond in aromatic azo compounds to the corresponding amines. The polypeptide is FMN-dependent NADH:quinone oxidoreductase 1 (Listeria monocytogenes serotype 4b (strain F2365)).